The primary structure comprises 154 residues: MGRFIFVSFGLLVVFLSLSGTGADVDCLPGWSAYDQSCYRVFKLLKTWDDAEKFCTERPKGGHLVSIESAGERDFVAQLVSENKQTDNVWLGLKIQSKGQQCSTEWTDGSSVSYENFSEYQSKKCFVLEKNTGFRTWLNLNCGSEYAFVCKSPP.

Residues 1–23 (MGRFIFVSFGLLVVFLSLSGTGA) form the signal peptide. 3 cysteine pairs are disulfide-bonded: Cys-27–Cys-38, Cys-55–Cys-150, and Cys-125–Cys-142. The region spanning 34 to 151 (YDQSCYRVFK…CGSEYAFVCK (118 aa)) is the C-type lectin domain. A glycan (N-linked (GlcNAc...) asparagine) is linked at Asn-116.

It belongs to the snaclec family. In terms of assembly, heterotetramer of the subunits alpha-1, alpha-2, beta-1 and beta-2; disulfide-linked. Expressed by the venom gland.

Its subcellular location is the secreted. In terms of biological role, agglucetin specifically causes platelet aggregation and surface exposure of integrin alpha-IIb/beta-3 with a GPIb-(GP1BA-) dependent manner in washed platelets. It binds to human platelets in a saturable manner, and its binding is specifically blocked by anti-GP Ib mAb. It regulates endothelial cell survival and promotes angiogenesis by activating integrin alpha-v/beta-3 signaling through FAK/phosphatidylinositol 3-kinase (PI3K)/Akt pathway. The protein is Snaclec agglucetin subunit alpha-1 of Deinagkistrodon acutus (Hundred-pace snake).